A 311-amino-acid polypeptide reads, in one-letter code: Porphobilinogen deaminase (311 aa).

S-(dipyrrolylmethanemethyl)cysteine is present on C242.

Belongs to the HMBS family. In terms of assembly, monomer. It depends on dipyrromethane as a cofactor.

It catalyses the reaction 4 porphobilinogen + H2O = hydroxymethylbilane + 4 NH4(+). It functions in the pathway porphyrin-containing compound metabolism; protoporphyrin-IX biosynthesis; coproporphyrinogen-III from 5-aminolevulinate: step 2/4. Functionally, tetrapolymerization of the monopyrrole PBG into the hydroxymethylbilane pre-uroporphyrinogen in several discrete steps. This chain is Porphobilinogen deaminase (hemC), found in Vibrio cholerae serotype O1 (strain ATCC 39315 / El Tor Inaba N16961).